The chain runs to 270 residues: Thymidylate synthase (270 aa).

DUMP is bound by residues R28 and 133–134 (RR). C153 serves as the catalytic Nucleophile. DUMP is bound by residues 173–176 (RSAD), N184, and 214–216 (HIY). A (6R)-5,10-methylene-5,6,7,8-tetrahydrofolate-binding site is contributed by D176. Residue A269 coordinates (6R)-5,10-methylene-5,6,7,8-tetrahydrofolate.

This sequence belongs to the thymidylate synthase family. Bacterial-type ThyA subfamily. Homodimer.

It localises to the cytoplasm. The enzyme catalyses dUMP + (6R)-5,10-methylene-5,6,7,8-tetrahydrofolate = 7,8-dihydrofolate + dTMP. It participates in pyrimidine metabolism; dTTP biosynthesis. Catalyzes the reductive methylation of 2'-deoxyuridine-5'-monophosphate (dUMP) to 2'-deoxythymidine-5'-monophosphate (dTMP) while utilizing 5,10-methylenetetrahydrofolate (mTHF) as the methyl donor and reductant in the reaction, yielding dihydrofolate (DHF) as a by-product. This enzymatic reaction provides an intracellular de novo source of dTMP, an essential precursor for DNA biosynthesis. The sequence is that of Thymidylate synthase from Corynebacterium diphtheriae (strain ATCC 700971 / NCTC 13129 / Biotype gravis).